We begin with the raw amino-acid sequence, 1117 residues long: PR domain zinc finger protein 10 (1117 aa).

Residues 97 to 142 (QQTPLGGLEAKEEEDEDEDEDTEEDEEEDGEDADLDDWEPDPPRPF) form a disordered region. A compositionally biased stretch (acidic residues) spans 107-136 (KEEEDEDEDEDTEEDEEEDGEDADLDDWEP). The 119-residue stretch at 182 to 300 (LPLVLYIDRF…PKQELKVWYA (119 aa)) folds into the SET domain. The N-terminal PR domain; essential for transcriptional activator activity stretch occupies residues 201-305 (IPKRTQLGPV…KVWYAASYAE (105 aa)). The segment at 329 to 351 (WPCYECNRRFISSEQLQQHLNSH) adopts a C2H2-type 1 zinc-finger fold. Lys354 participates in a covalent cross-link: Glycyl lysine isopeptide (Lys-Gly) (interchain with G-Cter in SUMO2). Over residues 361–381 (TRGRGRGRGKRRFGPGRRPGR) the composition is skewed to basic residues. Residues 361 to 386 (TRGRGRGRGKRRFGPGRRPGRPPKFI) form a disordered region. Position 398 is a phosphoserine (Ser398). A Phosphothreonine modification is found at Thr402. Positions 440–474 (QETQSSLEHEPETHTLHLQPQHEESVVPTQSTLTA) are disordered. Over residues 446–464 (LEHEPETHTLHLQPQHEES) the composition is skewed to basic and acidic residues. 9 C2H2-type zinc fingers span residues 500–522 (FKCLQCGKAFREKDKLDQHLRFH), 530–552 (LTCDLCNKGFISSASLESHMKLH), 558–580 (YSCIFCPESFDRLDLLKDHVAIH), 586–609 (FTCPTCKKRFPDFIQVKKHVRSFH), 614–636 (YQCTECDKAFCRPDKLRLHMLRH), 642–665 (FLCSTCGKQFKRKDKLREHMQRMH), 697–720 (FKCRLCMMGFRRRGMLVNHLSKRH), 742–765 (YFCQYCDKVYKSASKRKAHILKNH), and 804–827 (VCCPHCSKQYSSKTKMVQHIRKKH). The segment at 871–1097 (QAMTELSQTL…QTTSQQQTTQ (227 aa)) is C-terminal glutamine-rich region; essential for transcriptional activator activity. 3 disordered regions span residues 919-943 (VAPATSPHQSQQSTVDVGQLHDPQP), 958-1001 (GQPL…SSVQ), and 1066-1094 (QTSALSGGVQVQPPAHSDSLDPQTTSQQQ). Residues 924-934 (SPHQSQQSTVD) show a composition bias toward polar residues.

It belongs to the class V-like SAM-binding methyltransferase superfamily.

Its subcellular location is the nucleus. In terms of biological role, transcriptional activator, essential for early embryonic development and survival of embryonic stem cells (ESCs). Supports cell growth and survival during early development by transcriptionally activating the expression of the translation initiation factor EIF3B, to sustain global translation. Activates the transcription of FLNC. The sequence is that of PR domain zinc finger protein 10 (PRDM10) from Pongo abelii (Sumatran orangutan).